We begin with the raw amino-acid sequence, 88 residues long: LYR motif-containing protein 2 (88 aa).

The N-terminal 19 residues, 1–19 (MAASRLPPAALTLKQFMRR), are a transit peptide targeting the mitochondrion.

It belongs to the complex I LYR family.

It localises to the mitochondrion. Its function is as follows. Involved in efficient integration of the N-module into mitochondrial respiratory chain complex I. This chain is LYR motif-containing protein 2 (Lyrm2), found in Mus musculus (Mouse).